Here is a 282-residue protein sequence, read N- to C-terminus: F-box/SPRY domain-containing protein 1 (282 aa).

The tract at residues 1-32 is disordered; that stretch reads MAAAAINAAAPPPPVAPTAPPPPPPPPLSQAS. Positions 10 to 28 are enriched in pro residues; the sequence is APPPPVAPTAPPPPPPPPL. The region spanning 29–78 is the F-box domain; sequence SQASGRLPSRVLELVFSYLDLPDLRSCGLVCKHWYRCLHGDENSEVWRSL. In terms of domain architecture, B30.2/SPRY spans 88-280; it reads LRTDILCNLP…VTLVYLGKPL (193 aa).

The protein belongs to the FBXO45/Fsn family. As to quaternary structure, probable component of a E3 ubiquitin ligase complex.

It participates in protein modification; protein ubiquitination. The chain is F-box/SPRY domain-containing protein 1 (fbxo45) from Xenopus tropicalis (Western clawed frog).